Reading from the N-terminus, the 163-residue chain is Large ribosomal subunit protein uL15 (163 aa).

Gly residues predominate over residues 27–37; that stretch reads SGLGKTAGRGQ. Residues 27–46 form a disordered region; sequence SGLGKTAGRGQKGQKSRSGV.

It belongs to the universal ribosomal protein uL15 family. As to quaternary structure, part of the 50S ribosomal subunit.

Functionally, binds to the 23S rRNA. In Zymomonas mobilis subsp. mobilis (strain ATCC 31821 / ZM4 / CP4), this protein is Large ribosomal subunit protein uL15.